We begin with the raw amino-acid sequence, 331 residues long: MNYFDLPKIDLHCHLDGSVRPQTIIDLADEQNLTLPSRDINVIKEMMVAPETCPNLDEYLKRFELPGMVMQTAEALERISFELFEDAANENVKYLEVRFGPLLHQVKGLSLDDIMDSVVRGMKRAEAQYDIHGNYILSILRTMPKDQIKAVLEAGAKHLNDGIVAFDLAGSEIPGFCHEFVPYAQYAKELGYRITIHAGEQGAGQNVYDAISLLGAERVGHGIFIHNHPEAYQLVKGEEVALETCPSSNVQTKAVNSLSEHPIKAFYKDGIAVTINTDNRTVSNTTMTDEVRKVVEAFELTEAEYFDIYTISVNNAFTSDAVKQHLLSFAQ.

Zn(2+)-binding residues include His12 and His14. Substrate-binding residues include His14, Asp16, and Gly170. Zn(2+) is bound at residue His197. The active-site Proton donor is the Glu200. Residue Asp278 participates in Zn(2+) binding.

The protein belongs to the metallo-dependent hydrolases superfamily. Adenosine and AMP deaminases family. Adenosine deaminase subfamily. It depends on Zn(2+) as a cofactor.

It catalyses the reaction adenosine + H2O + H(+) = inosine + NH4(+). It carries out the reaction 2'-deoxyadenosine + H2O + H(+) = 2'-deoxyinosine + NH4(+). Catalyzes the hydrolytic deamination of adenosine and 2-deoxyadenosine. In Vibrio vulnificus (strain YJ016), this protein is Adenosine deaminase.